The sequence spans 82 residues: Small ribosomal subunit protein uS17 (82 aa).

Belongs to the universal ribosomal protein uS17 family. In terms of assembly, part of the 30S ribosomal subunit.

Its function is as follows. One of the primary rRNA binding proteins, it binds specifically to the 5'-end of 16S ribosomal RNA. In Bradyrhizobium sp. (strain BTAi1 / ATCC BAA-1182), this protein is Small ribosomal subunit protein uS17.